The following is a 160-amino-acid chain: SsrA-binding protein (160 aa).

This sequence belongs to the SmpB family.

Its subcellular location is the cytoplasm. Functionally, required for rescue of stalled ribosomes mediated by trans-translation. Binds to transfer-messenger RNA (tmRNA), required for stable association of tmRNA with ribosomes. tmRNA and SmpB together mimic tRNA shape, replacing the anticodon stem-loop with SmpB. tmRNA is encoded by the ssrA gene; the 2 termini fold to resemble tRNA(Ala) and it encodes a 'tag peptide', a short internal open reading frame. During trans-translation Ala-aminoacylated tmRNA acts like a tRNA, entering the A-site of stalled ribosomes, displacing the stalled mRNA. The ribosome then switches to translate the ORF on the tmRNA; the nascent peptide is terminated with the 'tag peptide' encoded by the tmRNA and targeted for degradation. The ribosome is freed to recommence translation, which seems to be the essential function of trans-translation. The protein is SsrA-binding protein of Klebsiella pneumoniae (strain 342).